We begin with the raw amino-acid sequence, 169 residues long: Macro domain-containing protein SCO6450 (169 aa).

The 169-residue stretch at 1–169 (MTGITLVQGD…AYEAFAARLG (169 aa)) folds into the Macro domain.

Belongs to the MacroD-type family.

The chain is Macro domain-containing protein SCO6450 from Streptomyces coelicolor (strain ATCC BAA-471 / A3(2) / M145).